The primary structure comprises 589 residues: Probable arginine--tRNA ligase, cytoplasmic (589 aa).

L-arginine contacts are provided by residues 121–123 (SPN), His-132, Tyr-332, Asp-336, and Gln-360. The 'HIGH' region motif lies at 121 to 132 (SPNIAKPFHAGH). An interaction with tRNA region spans residues 469 to 483 (DTGPYLQYAHARLCS).

It belongs to the class-I aminoacyl-tRNA synthetase family.

It is found in the cytoplasm. It localises to the cytosol. The catalysed reaction is tRNA(Arg) + L-arginine + ATP = L-arginyl-tRNA(Arg) + AMP + diphosphate. In terms of biological role, forms part of a macromolecular complex that catalyzes the attachment of specific amino acids to cognate tRNAs during protein synthesis. This chain is Probable arginine--tRNA ligase, cytoplasmic (argS1), found in Dictyostelium discoideum (Social amoeba).